Consider the following 217-residue polypeptide: Non-structural protein NS3 (217 aa).

It belongs to the orbivirus NS3 family.

In terms of biological role, may play a role in the release of virions from infected cells. This is Non-structural protein NS3 (Segment-10) from Camelus dromedarius (Dromedary).